Reading from the N-terminus, the 107-residue chain is MKKRGRCSLTNYANAKALVEKILEDLKNNGIKVKSPLSKIQDFHCEADFSVEIENRVAYVDATFTFDKLPNEDLVEKIEAVMTTYNSYLERIDFESDYTKLEFRSVR.

This is an uncharacterized protein from Methanocaldococcus jannaschii (strain ATCC 43067 / DSM 2661 / JAL-1 / JCM 10045 / NBRC 100440) (Methanococcus jannaschii).